We begin with the raw amino-acid sequence, 534 residues long: GMP synthase [glutamine-hydrolyzing] (534 aa).

One can recognise a Glutamine amidotransferase type-1 domain in the interval 4-202 (KILILDFGSQ…VLEIAKAQPD (199 aa)). Residue cysteine 81 is the Nucleophile of the active site. Residues histidine 176 and glutamate 178 contribute to the active site. Residues 203-402 (WVMKDHVAEA…LGLPHDMVYR (200 aa)) enclose the GMPS ATP-PPase domain. Residue 230-236 (SGGVDSS) coordinates ATP.

As to quaternary structure, homodimer.

The catalysed reaction is XMP + L-glutamine + ATP + H2O = GMP + L-glutamate + AMP + diphosphate + 2 H(+). The protein operates within purine metabolism; GMP biosynthesis; GMP from XMP (L-Gln route): step 1/1. Catalyzes the synthesis of GMP from XMP. This Methylibium petroleiphilum (strain ATCC BAA-1232 / LMG 22953 / PM1) protein is GMP synthase [glutamine-hydrolyzing].